The following is a 218-amino-acid chain: Guanylate kinase (218 aa).

Residues Gly14–Ser193 form the Guanylate kinase-like domain. Ser21–Ser28 is an ATP binding site.

The protein belongs to the guanylate kinase family.

The protein localises to the cytoplasm. The enzyme catalyses GMP + ATP = GDP + ADP. Its function is as follows. Essential for recycling GMP and indirectly, cGMP. The chain is Guanylate kinase from Chelativorans sp. (strain BNC1).